Consider the following 100-residue polypeptide: Urease subunit gamma (100 aa).

The protein belongs to the urease gamma subunit family. As to quaternary structure, heterotrimer of UreA (gamma), UreB (beta) and UreC (alpha) subunits. Three heterotrimers associate to form the active enzyme.

The protein resides in the cytoplasm. The enzyme catalyses urea + 2 H2O + H(+) = hydrogencarbonate + 2 NH4(+). Its pathway is nitrogen metabolism; urea degradation; CO(2) and NH(3) from urea (urease route): step 1/1. The sequence is that of Urease subunit gamma from Chromohalobacter salexigens (strain ATCC BAA-138 / DSM 3043 / CIP 106854 / NCIMB 13768 / 1H11).